Consider the following 402-residue polypeptide: Olfactomedin-like protein 1 (402 aa).

A signal peptide spans 1–28 (MMVALPGASASLVLFLAAFLPPLQHAQD). An N-linked (GlcNAc...) asparagine glycan is attached at Asn-66. Residues 73 to 135 (RCQTHTNEYR…EAEEEKKIRT (63 aa)) are a coiled coil. N-linked (GlcNAc...) asparagine glycans are attached at residues Asn-138 and Asn-183. An Olfactomedin-like domain is found at 140 to 397 (SCDNMLMAIK…QIIYKLQTKK (258 aa)). A disulfide bridge connects residues Cys-141 and Cys-324.

In terms of processing, highly N-glycosylated.

The protein localises to the secreted. This Rattus norvegicus (Rat) protein is Olfactomedin-like protein 1 (Olfml1).